Here is a 340-residue protein sequence, read N- to C-terminus: Glycerol-3-phosphate dehydrogenase [NAD(P)+] (340 aa).

Positions 13, 14, and 108 each coordinate NADPH. Residues Lys-108, Gly-139, and Ser-141 each contribute to the sn-glycerol 3-phosphate site. Ala-143 contributes to the NADPH binding site. Sn-glycerol 3-phosphate contacts are provided by Lys-194, Asp-247, Ser-257, Arg-258, and Asn-259. The active-site Proton acceptor is the Lys-194. Arg-258 contacts NADPH. Positions 282 and 284 each coordinate NADPH.

The protein belongs to the NAD-dependent glycerol-3-phosphate dehydrogenase family.

The protein resides in the cytoplasm. It catalyses the reaction sn-glycerol 3-phosphate + NAD(+) = dihydroxyacetone phosphate + NADH + H(+). It carries out the reaction sn-glycerol 3-phosphate + NADP(+) = dihydroxyacetone phosphate + NADPH + H(+). It participates in membrane lipid metabolism; glycerophospholipid metabolism. In terms of biological role, catalyzes the reduction of the glycolytic intermediate dihydroxyacetone phosphate (DHAP) to sn-glycerol 3-phosphate (G3P), the key precursor for phospholipid synthesis. This chain is Glycerol-3-phosphate dehydrogenase [NAD(P)+], found in Streptococcus thermophilus (strain ATCC BAA-491 / LMD-9).